The primary structure comprises 406 residues: S-adenosylmethionine synthase (406 aa).

Position 16 (His16) interacts with ATP. Residue Asp18 coordinates Mg(2+). Glu44 contributes to the K(+) binding site. The L-methionine site is built by Glu57 and Gln100. The tract at residues 100-110 is flexible loop; the sequence is QSVDIAQGVDR. Residues 165-167, Asp241, 247-248, Ala264, and Lys268 contribute to the ATP site; these read DAK and RK. Residue Asp241 coordinates L-methionine. Lys272 contacts L-methionine.

The protein belongs to the AdoMet synthase family. In terms of assembly, homotetramer; dimer of dimers. The cofactor is Mg(2+). K(+) is required as a cofactor.

The protein localises to the cytoplasm. It carries out the reaction L-methionine + ATP + H2O = S-adenosyl-L-methionine + phosphate + diphosphate. It functions in the pathway amino-acid biosynthesis; S-adenosyl-L-methionine biosynthesis; S-adenosyl-L-methionine from L-methionine: step 1/1. In terms of biological role, catalyzes the formation of S-adenosylmethionine (AdoMet) from methionine and ATP. The overall synthetic reaction is composed of two sequential steps, AdoMet formation and the subsequent tripolyphosphate hydrolysis which occurs prior to release of AdoMet from the enzyme. The polypeptide is S-adenosylmethionine synthase (Chromohalobacter salexigens (strain ATCC BAA-138 / DSM 3043 / CIP 106854 / NCIMB 13768 / 1H11)).